A 299-amino-acid polypeptide reads, in one-letter code: MKTGFVALAGKPNVGKSSLVNAIVGRKVLIVSDKPQTTRNRINVIHTTNDFQVIFVDTPGIHKPLYRLGEYMVKAAVSALKGVDLILTVIDAKEGIGKPEAFVFDYVNQSNTKTIGVINKIDLVGTEKVETLQKIMEEKLTNCISIVKTSATRNEGTKELLDLIIENLPEGPQYYPEDMVTDRPLSFMVSEIVREKIFHFTYEEIPHSVAVIVEEIKERDNGILYIRANIYVDRNSQKGIIIGNKGTMIKKIGQNARQEIEYLVGGKVFLDLHVKVKRNWRDKDFIILNEIGMKDDIRR.

The Era-type G domain occupies 2–170 (KTGFVALAGK…LDLIIENLPE (169 aa)). The tract at residues 10 to 17 (GKPNVGKS) is G1. 10-17 (GKPNVGKS) provides a ligand contact to GTP. The segment at 36 to 40 (QTTRN) is G2. The G3 stretch occupies residues 57 to 60 (DTPG). Residues 57–61 (DTPGI) and 119–122 (NKID) contribute to the GTP site. Residues 119–122 (NKID) form a G4 region. The segment at 149–151 (TSA) is G5. Residues 201–278 (TYEEIPHSVA…FLDLHVKVKR (78 aa)) enclose the KH type-2 domain.

This sequence belongs to the TRAFAC class TrmE-Era-EngA-EngB-Septin-like GTPase superfamily. Era GTPase family. As to quaternary structure, monomer.

It is found in the cytoplasm. Its subcellular location is the cell inner membrane. Functionally, an essential GTPase that binds both GDP and GTP, with rapid nucleotide exchange. Plays a role in 16S rRNA processing and 30S ribosomal subunit biogenesis and possibly also in cell cycle regulation and energy metabolism. The polypeptide is GTPase Era (Thermosipho melanesiensis (strain DSM 12029 / CIP 104789 / BI429)).